Reading from the N-terminus, the 339-residue chain is Tetraacyldisaccharide 4'-kinase (339 aa).

Thr58–Thr65 serves as a coordination point for ATP.

This sequence belongs to the LpxK family.

The enzyme catalyses a lipid A disaccharide + ATP = a lipid IVA + ADP + H(+). Its pathway is glycolipid biosynthesis; lipid IV(A) biosynthesis; lipid IV(A) from (3R)-3-hydroxytetradecanoyl-[acyl-carrier-protein] and UDP-N-acetyl-alpha-D-glucosamine: step 6/6. In terms of biological role, transfers the gamma-phosphate of ATP to the 4'-position of a tetraacyldisaccharide 1-phosphate intermediate (termed DS-1-P) to form tetraacyldisaccharide 1,4'-bis-phosphate (lipid IVA). The protein is Tetraacyldisaccharide 4'-kinase of Shewanella baltica (strain OS155 / ATCC BAA-1091).